We begin with the raw amino-acid sequence, 274 residues long: Thiamine kinase (274 aa).

This sequence belongs to the thiamine kinase family.

It catalyses the reaction thiamine + ATP = thiamine phosphate + ADP + H(+). It participates in cofactor biosynthesis; thiamine diphosphate biosynthesis; thiamine phosphate from thiamine: step 1/1. Catalyzes the ATP-dependent phosphorylation of thiamine to thiamine phosphate. Is involved in thiamine salvage. The chain is Thiamine kinase from Escherichia coli (strain SMS-3-5 / SECEC).